Here is a 254-residue protein sequence, read N- to C-terminus: Ubiquinone/menaquinone biosynthesis C-methyltransferase UbiE (254 aa).

Residues T77, D98, 126–127 (NA), and S143 contribute to the S-adenosyl-L-methionine site.

This sequence belongs to the class I-like SAM-binding methyltransferase superfamily. MenG/UbiE family.

It catalyses the reaction a 2-demethylmenaquinol + S-adenosyl-L-methionine = a menaquinol + S-adenosyl-L-homocysteine + H(+). It carries out the reaction a 2-methoxy-6-(all-trans-polyprenyl)benzene-1,4-diol + S-adenosyl-L-methionine = a 5-methoxy-2-methyl-3-(all-trans-polyprenyl)benzene-1,4-diol + S-adenosyl-L-homocysteine + H(+). The protein operates within quinol/quinone metabolism; menaquinone biosynthesis; menaquinol from 1,4-dihydroxy-2-naphthoate: step 2/2. Its pathway is cofactor biosynthesis; ubiquinone biosynthesis. In terms of biological role, methyltransferase required for the conversion of demethylmenaquinol (DMKH2) to menaquinol (MKH2) and the conversion of 2-polyprenyl-6-methoxy-1,4-benzoquinol (DDMQH2) to 2-polyprenyl-3-methyl-6-methoxy-1,4-benzoquinol (DMQH2). The chain is Ubiquinone/menaquinone biosynthesis C-methyltransferase UbiE from Blochmanniella floridana.